Reading from the N-terminus, the 174-residue chain is Disulfide bond formation protein B (174 aa).

Residues 1–14 lie on the Cytoplasmic side of the membrane; it reads MLNFLNICSKTRKS. A helical membrane pass occupies residues 15 to 31; that stretch reads WVLLIFTVVILELIALY. At 32 to 49 the chain is on the periplasmic side; it reads LQHIVLIKPCVLCVYQRC. Cysteine 41 and cysteine 44 form a disulfide bridge. A helical membrane pass occupies residues 50–65; it reads ALCGIGIAGLIGTIAP. Topologically, residues 66–71 are cytoplasmic; sequence FTPLRF. Residues 72–89 form a helical membrane-spanning segment; sequence FSIPIWIYSAWKGLLLAK. Over 90-144 the chain is Periplasmic; it reads EYTDIQLHPSPFFMCDLFVQFPHWLPLNKWWPSMFDADGDCAEYKWYFLSLEISQ. A disulfide bridge links cysteine 104 with cysteine 130. Residues 145–163 form a helical membrane-spanning segment; that stretch reads WMLIIFANYLIIAILVSLS. Residues 164–174 lie on the Cytoplasmic side of the membrane; sequence QIIDLKKWNNK.

The protein belongs to the DsbB family.

It localises to the cell inner membrane. Functionally, required for disulfide bond formation in some periplasmic proteins. Acts by oxidizing the DsbA protein. The sequence is that of Disulfide bond formation protein B from Blochmanniella pennsylvanica (strain BPEN).